Consider the following 317-residue polypeptide: Proline iminopeptidase (317 aa).

An AB hydrolase-1 domain is found at 41 to 296 (VFIHGGPGGG…ELHIVEGAGH (256 aa)). Ser-113 acts as the Nucleophile in catalysis. The active site involves Asp-268. His-296 acts as the Proton donor in catalysis.

This sequence belongs to the peptidase S33 family. As to quaternary structure, monomer.

The protein resides in the cytoplasm. It catalyses the reaction Release of N-terminal proline from a peptide.. Functionally, specifically catalyzes the removal of N-terminal proline residues from peptides. This chain is Proline iminopeptidase (pip), found in Serratia marcescens.